The sequence spans 201 residues: Large ribosomal subunit protein uL4 (201 aa).

The segment at 43 to 71 (TRAQKTRSEVSGGGKKPWAQKGTGRARAG) is disordered.

It belongs to the universal ribosomal protein uL4 family. In terms of assembly, part of the 50S ribosomal subunit.

Functionally, one of the primary rRNA binding proteins, this protein initially binds near the 5'-end of the 23S rRNA. It is important during the early stages of 50S assembly. It makes multiple contacts with different domains of the 23S rRNA in the assembled 50S subunit and ribosome. Forms part of the polypeptide exit tunnel. The protein is Large ribosomal subunit protein uL4 of Pseudoalteromonas translucida (strain TAC 125).